A 254-amino-acid polypeptide reads, in one-letter code: Countin-2 (254 aa).

The first 19 residues, 1–19 (MMIKYITIAILFIASLVKA), serve as a signal peptide directing secretion. Residues 22–107 (QFSLCPTCVD…EELTVCPKNQ (86 aa)) form the Saposin B-type domain. 3 disulfide bridges follow: Cys-26–Cys-103, Cys-29–Cys-97, and Cys-56–Cys-68. 2 N-linked (GlcNAc...) asparagine glycosylation sites follow: Asn-110 and Asn-219. A disordered region spans residues 231-254 (QMTGTGSGSGSGSGSSSGAAYLRY). Positions 233–245 (TGTGSGSGSGSGS) are enriched in gly residues.

Belongs to the countin family.

The protein localises to the secreted. Cell-counting factor that limits the minimum size of the multicellular structure. May up-regulate the expression of both gp24 and gp80, which mediate cell adhesion. This chain is Countin-2 (ctnB), found in Dictyostelium discoideum (Social amoeba).